A 134-amino-acid chain; its full sequence is Holo-[acyl-carrier-protein] synthase (134 aa).

Residues D8 and E56 each coordinate Mg(2+).

The protein belongs to the P-Pant transferase superfamily. AcpS family. It depends on Mg(2+) as a cofactor.

It is found in the cytoplasm. It carries out the reaction apo-[ACP] + CoA = holo-[ACP] + adenosine 3',5'-bisphosphate + H(+). Functionally, transfers the 4'-phosphopantetheine moiety from coenzyme A to a Ser of acyl-carrier-protein. The polypeptide is Holo-[acyl-carrier-protein] synthase (Clostridium kluyveri (strain ATCC 8527 / DSM 555 / NBRC 12016 / NCIMB 10680 / K1)).